We begin with the raw amino-acid sequence, 198 residues long: ATP-dependent Clp protease proteolytic subunit (198 aa).

Catalysis depends on serine 101, which acts as the Nucleophile. Histidine 126 is a catalytic residue.

This sequence belongs to the peptidase S14 family. In terms of assembly, component of the chloroplastic Clp protease core complex.

Its subcellular location is the plastid. It is found in the chloroplast stroma. The enzyme catalyses Hydrolysis of proteins to small peptides in the presence of ATP and magnesium. alpha-casein is the usual test substrate. In the absence of ATP, only oligopeptides shorter than five residues are hydrolyzed (such as succinyl-Leu-Tyr-|-NHMec, and Leu-Tyr-Leu-|-Tyr-Trp, in which cleavage of the -Tyr-|-Leu- and -Tyr-|-Trp bonds also occurs).. In terms of biological role, cleaves peptides in various proteins in a process that requires ATP hydrolysis. Has a chymotrypsin-like activity. Plays a major role in the degradation of misfolded proteins. This is ATP-dependent Clp protease proteolytic subunit from Psilotum nudum (Whisk fern).